The following is a 72-amino-acid chain: Translation initiation factor IF-1 (72 aa).

The region spanning 1 to 72 (MAKQSAIEKD…SKGRIAFRYK (72 aa)) is the S1-like domain.

This sequence belongs to the IF-1 family. As to quaternary structure, component of the 30S ribosomal translation pre-initiation complex which assembles on the 30S ribosome in the order IF-2 and IF-3, IF-1 and N-formylmethionyl-tRNA(fMet); mRNA recruitment can occur at any time during PIC assembly.

Its subcellular location is the cytoplasm. Functionally, one of the essential components for the initiation of protein synthesis. Stabilizes the binding of IF-2 and IF-3 on the 30S subunit to which N-formylmethionyl-tRNA(fMet) subsequently binds. Helps modulate mRNA selection, yielding the 30S pre-initiation complex (PIC). Upon addition of the 50S ribosomal subunit IF-1, IF-2 and IF-3 are released leaving the mature 70S translation initiation complex. This is Translation initiation factor IF-1 from Parabacteroides distasonis (strain ATCC 8503 / DSM 20701 / CIP 104284 / JCM 5825 / NCTC 11152).